Here is a 550-residue protein sequence, read N- to C-terminus: Chaperonin GroEL (550 aa).

ATP is bound by residues 30–33, Lys-51, 87–91, Gly-415, 479–481, and Asp-495; these read TLGP, DGTTT, and NAA.

Belongs to the chaperonin (HSP60) family. In terms of assembly, forms a cylinder of 14 subunits composed of two heptameric rings stacked back-to-back. Interacts with the co-chaperonin GroES.

The protein localises to the cytoplasm. It catalyses the reaction ATP + H2O + a folded polypeptide = ADP + phosphate + an unfolded polypeptide.. Functionally, together with its co-chaperonin GroES, plays an essential role in assisting protein folding. The GroEL-GroES system forms a nano-cage that allows encapsulation of the non-native substrate proteins and provides a physical environment optimized to promote and accelerate protein folding. The protein is Chaperonin GroEL of Burkholderia mallei (strain NCTC 10247).